A 928-amino-acid chain; its full sequence is DNA-binding protein RFX6 (928 aa).

2 disordered regions span residues 1–22 (MAKV…QVSP) and 53–102 (PGGA…AADL). The span at 92 to 101 (SHDSKTKAAD) shows a compositional bias: basic and acidic residues. A DNA-binding region (RFX-type winged-helix) is located at residues 124–199 (TLQWLEENYI…YHYYGIGIKE (76 aa)).

This sequence belongs to the RFX family. As to quaternary structure, interacts with RFX3.

It is found in the nucleus. Functionally, transcription factor required to direct islet cell differentiation during endocrine pancreas development. Specifically required for the differentiation of 4 of the 5 islet cell types and for the production of insulin. Not required for pancreatic PP (polypeptide-producing) cells differentiation. Acts downstream of NEUROG3 and regulates the transcription factors involved in beta-cell maturation and function, thereby restricting the expression of the beta-cell differentiation and specification genes, and thus the beta-cell fate choice. Activates transcription by forming a heterodimer with RFX3 and binding to the X-box in the promoter of target genes. Involved in glucose-stimulated insulin secretion by promoting insulin and L-type calcium channel gene transcription. The polypeptide is DNA-binding protein RFX6 (RFX6) (Ailuropoda melanoleuca (Giant panda)).